A 171-amino-acid chain; its full sequence is Small ribosomal subunit protein uS13 (171 aa).

Residues 128 to 171 (HERGQKVRGQRTKSTGRTEGTIGVNVEAIKEEQAEDDAADGGEE) are disordered. A compositionally biased stretch (acidic residues) spans 160-171 (QAEDDAADGGEE).

It belongs to the universal ribosomal protein uS13 family. Part of the 30S ribosomal subunit. Forms a loose heterodimer with protein S19. Forms two bridges to the 50S subunit in the 70S ribosome.

Its function is as follows. Located at the top of the head of the 30S subunit, it contacts several helices of the 16S rRNA. In the 70S ribosome it contacts the 23S rRNA (bridge B1a) and protein L5 of the 50S subunit (bridge B1b), connecting the 2 subunits; these bridges are implicated in subunit movement. This is Small ribosomal subunit protein uS13 from Halobacterium salinarum (strain ATCC 700922 / JCM 11081 / NRC-1) (Halobacterium halobium).